A 176-amino-acid chain; its full sequence is Pituitary adenylate cyclase-activating polypeptide (176 aa).

An N-terminal signal peptide occupies residues 1–24 (MTMCSGARLALLVYGIIMHSSVYC). Positions 25-80 (SPAAAGLRFPGIRPEDEAYDEDGNPLQDFYDSDPPGVGGPASTLRDAYALYYPAEE) are excised as a propeptide. The interval 150–158 (VKKYLAAVL) is important for receptor binding. The residue at position 158 (leucine 158) is a Leucine amide. Position 169 is a lysine amide (lysine 169). A propeptide spanning residues 173–176 (IAYL) is cleaved from the precursor.

The protein belongs to the glucagon family.

The protein resides in the secreted. In terms of biological role, PACAP is a neuropeptide involved in diverse array of physiological processes through activating the PACAP subfamily of class B1 G protein-coupled receptors: VIP receptor 1 (VIPR1), VIP receptor 2 (VIPR2), and PACAP type I receptor (ADCYAP1R1). Exerts neuroprotective and general cytoprotective effects due to anti-apoptotic, anti-inflammatory, and antioxidant actions. Promotes neuron projection development through the RAPGEF2/Rap1/B-Raf/ERK pathway. In chromaffin cells, induces long-lasting increase of intracellular calcium concentrations and neuroendocrine secretion. Involved in the control of glucose homeostasis, induces insulin secretion by pancreatic beta cells. PACAP exists in two bioactive forms from proteolysis of the same precursor protein, PACAP27 and PACAP38, which differ by eleven amino acid residues in the C-terminus. The protein is Pituitary adenylate cyclase-activating polypeptide (ADCYAP1) of Sus scrofa (Pig).